The following is a 307-amino-acid chain: Probable GTP 3',8-cyclase (307 aa).

In terms of domain architecture, Radical SAM core spans 5–227 (AYGRRISSLR…RRTKYYLGGA (223 aa)). Residue R14 coordinates GTP. Positions 21 and 25 each coordinate [4Fe-4S] cluster. Y27 serves as a coordination point for S-adenosyl-L-methionine. C28 contributes to the [4Fe-4S] cluster binding site. K61 is a binding site for GTP. G65 is an S-adenosyl-L-methionine binding site. Residue T89 participates in GTP binding. S113 is an S-adenosyl-L-methionine binding site. GTP is bound at residue K151. Residues C241 and C244 each contribute to the [4Fe-4S] cluster site. 246-248 (RLR) serves as a coordination point for GTP. A [4Fe-4S] cluster-binding site is contributed by C258.

This sequence belongs to the radical SAM superfamily. MoaA family. Requires [4Fe-4S] cluster as cofactor.

The enzyme catalyses GTP + AH2 + S-adenosyl-L-methionine = (8S)-3',8-cyclo-7,8-dihydroguanosine 5'-triphosphate + 5'-deoxyadenosine + L-methionine + A + H(+). It participates in cofactor biosynthesis; molybdopterin biosynthesis. Functionally, catalyzes the cyclization of GTP to (8S)-3',8-cyclo-7,8-dihydroguanosine 5'-triphosphate. This is Probable GTP 3',8-cyclase from Methanocella arvoryzae (strain DSM 22066 / NBRC 105507 / MRE50).